The following is a 151-amino-acid chain: NADPH-dependent 7-cyano-7-deazaguanine reductase (151 aa).

C51 acts as the Thioimide intermediate in catalysis. The Proton donor role is filled by D58. Substrate is bound by residues 73–75 and 92–93; these read VES and HE.

Belongs to the GTP cyclohydrolase I family. QueF type 1 subfamily.

The protein localises to the cytoplasm. It carries out the reaction 7-aminomethyl-7-carbaguanine + 2 NADP(+) = 7-cyano-7-deazaguanine + 2 NADPH + 3 H(+). Its pathway is tRNA modification; tRNA-queuosine biosynthesis. Its function is as follows. Catalyzes the NADPH-dependent reduction of 7-cyano-7-deazaguanine (preQ0) to 7-aminomethyl-7-deazaguanine (preQ1). In Bacteroides thetaiotaomicron (strain ATCC 29148 / DSM 2079 / JCM 5827 / CCUG 10774 / NCTC 10582 / VPI-5482 / E50), this protein is NADPH-dependent 7-cyano-7-deazaguanine reductase.